Consider the following 354-residue polypeptide: MAQKIRVLIVDDSAVIRKLLEKIFSSCADIEVVGTASDPYIARDKLVALKPDVMTLDVEMPRMDGISFLEKVMQHFPTRTIIFSSLAKTGSETYLRALEAGAIEIMEKPSIDVSQSLETLSAAIIEKVKAVAKARINPIKAVVPNPGAPVQKVASTSLARTTHQLLAVASSTGGTEALKVFLSGMPADIPGTLVVQHMPPGFTKSFAENLDKMFPFEVKEAQEGDQVVPGRVLIAPGNYHMEITRSGAFYYVKLHQGPALHSVRPAADYLMKSVAKYVGKNAMGVVLTGMGKDGAEGLLEMKNAGAYTVAQNEETCVVYGMPAAAVALGAADKVLPLDRIAGDLLKQLQTRNAA.

Residues 6–123 (RVLIVDDSAV…SQSLETLSAA (118 aa)) form the Response regulatory domain. Asp57 bears the 4-aspartylphosphate mark. The region spanning 159–351 (ARTTHQLLAV…GDLLKQLQTR (193 aa)) is the CheB-type methylesterase domain. Active-site residues include Ser171, His197, and Asp293.

The protein belongs to the CheB family. In terms of processing, phosphorylated by CheA. Phosphorylation of the N-terminal regulatory domain activates the methylesterase activity.

Its subcellular location is the cytoplasm. The catalysed reaction is [protein]-L-glutamate 5-O-methyl ester + H2O = L-glutamyl-[protein] + methanol + H(+). It catalyses the reaction L-glutaminyl-[protein] + H2O = L-glutamyl-[protein] + NH4(+). Involved in chemotaxis. Part of a chemotaxis signal transduction system that modulates chemotaxis in response to various stimuli. Catalyzes the demethylation of specific methylglutamate residues introduced into the chemoreceptors (methyl-accepting chemotaxis proteins or MCP) by CheR. Also mediates the irreversible deamidation of specific glutamine residues to glutamic acid. The protein is Protein-glutamate methylesterase/protein-glutamine glutaminase of Bdellovibrio bacteriovorus (strain ATCC 15356 / DSM 50701 / NCIMB 9529 / HD100).